Here is a 115-residue protein sequence, read N- to C-terminus: Promotilin (115 aa).

An N-terminal signal peptide occupies residues 1–25 (MVSRKAVAALLVVHVAAMLASQTEA). Positions 39–72 (QEKERNKGQKKSLSVWQRSGEEGPVDPAEPIREE) are disordered.

This sequence belongs to the motilin family.

It is found in the secreted. In terms of biological role, plays an important role in the regulation of interdigestive gastrointestinal motility and indirectly causes rhythmic contraction of duodenal and colonic smooth muscle. The polypeptide is Promotilin (MLN) (Homo sapiens (Human)).